A 160-amino-acid polypeptide reads, in one-letter code: MDALIEEVDGISNRTEFNGKKLLDGTETDGFTFQIGANAGQQLTVNIDSMSSTALGVNALNVTDFANTPFDTQLESIDTAINNVSNQRAKLGAVQNRLEHTINNLGASSENLTAAESRIRDVDMAKEMSEFTKNNIPSQASQAMLAQANQQPQNVLQLLR.

The protein belongs to the bacterial flagellin family. As to quaternary structure, interacts with FliW.

The protein localises to the bacterial flagellum. This chain is Putative flagellin YvzB (yvzB), found in Bacillus subtilis (strain 168).